The chain runs to 493 residues: Guanosine-5'-triphosphate,3'-diphosphate pyrophosphatase (493 aa).

It belongs to the GppA/Ppx family. GppA subfamily.

The catalysed reaction is guanosine 3'-diphosphate 5'-triphosphate + H2O = guanosine 3',5'-bis(diphosphate) + phosphate + H(+). Its pathway is purine metabolism; ppGpp biosynthesis; ppGpp from GTP: step 2/2. Catalyzes the conversion of pppGpp to ppGpp. Guanosine pentaphosphate (pppGpp) is a cytoplasmic signaling molecule which together with ppGpp controls the 'stringent response', an adaptive process that allows bacteria to respond to amino acid starvation, resulting in the coordinated regulation of numerous cellular activities. The polypeptide is Guanosine-5'-triphosphate,3'-diphosphate pyrophosphatase (Salmonella heidelberg (strain SL476)).